The following is a 25-amino-acid chain: SPbeta prophage-derived uncharacterized protein YotF (25 aa).

In Bacillus subtilis (strain 168), this protein is SPbeta prophage-derived uncharacterized protein YotF (yotF).